Here is an 87-residue protein sequence, read N- to C-terminus: Putative regulatory protein GTNG_1019 (87 aa).

It belongs to the RemA family.

The protein is Putative regulatory protein GTNG_1019 of Geobacillus thermodenitrificans (strain NG80-2).